Here is a 989-residue protein sequence, read N- to C-terminus: Translation initiation factor IF-2 (989 aa).

Disordered regions lie at residues 28–60 (GVTK…TDAD) and 97–397 (VRRD…DQNT). Composition is skewed to basic and acidic residues over residues 40 to 60 (ETDK…TDAD) and 122 to 178 (ELQR…EAAK). Over residues 182–223 (AAAAEAAAREQQTQASKPAQAAQPAAAKAEPVAAKAAEPVVA) the composition is skewed to low complexity. Residues 231–280 (ERAAAERAAQREAAKKAEDAARQAAEKARAEQEEIAKRRAAAEAEARAIR) are compositionally biased toward basic and acidic residues. Residues 318–345 (RPAGEAPARPAAKKPAAAAPAATTTPSA) show a composition bias toward low complexity. Positions 374–387 (TSGGVDRGWRGGPK) are enriched in gly residues. A tr-type G domain is found at 489 to 658 (PRPPVVTVMG…LLQAEVLELK (170 aa)). Positions 498–505 (GHVDHGKT) are G1. GTP is bound at residue 498–505 (GHVDHGKT). Residues 523 to 527 (GITQH) form a G2 region. Positions 544–547 (DTPG) are G3. Residues 544 to 548 (DTPGH) and 598 to 601 (NKID) contribute to the GTP site. The segment at 598–601 (NKID) is G4. Residues 634–636 (SAK) form a G5 region.

This sequence belongs to the TRAFAC class translation factor GTPase superfamily. Classic translation factor GTPase family. IF-2 subfamily.

It is found in the cytoplasm. One of the essential components for the initiation of protein synthesis. Protects formylmethionyl-tRNA from spontaneous hydrolysis and promotes its binding to the 30S ribosomal subunits. Also involved in the hydrolysis of GTP during the formation of the 70S ribosomal complex. The chain is Translation initiation factor IF-2 from Paraburkholderia xenovorans (strain LB400).